The sequence spans 700 residues: Elongation factor G (700 aa).

In terms of domain architecture, tr-type G spans 10 to 286 (SKVRNIGIMA…AVIDYLPSPL (277 aa)). GTP-binding positions include 19 to 26 (AHIDAGKT), 83 to 87 (DTPGH), and 137 to 140 (NKMD).

The protein belongs to the TRAFAC class translation factor GTPase superfamily. Classic translation factor GTPase family. EF-G/EF-2 subfamily.

Its subcellular location is the cytoplasm. Catalyzes the GTP-dependent ribosomal translocation step during translation elongation. During this step, the ribosome changes from the pre-translocational (PRE) to the post-translocational (POST) state as the newly formed A-site-bound peptidyl-tRNA and P-site-bound deacylated tRNA move to the P and E sites, respectively. Catalyzes the coordinated movement of the two tRNA molecules, the mRNA and conformational changes in the ribosome. The chain is Elongation factor G from Mycolicibacterium gilvum (strain PYR-GCK) (Mycobacterium gilvum (strain PYR-GCK)).